A 114-amino-acid polypeptide reads, in one-letter code: Large ribosomal subunit protein bL19 (114 aa).

This sequence belongs to the bacterial ribosomal protein bL19 family.

Its function is as follows. This protein is located at the 30S-50S ribosomal subunit interface and may play a role in the structure and function of the aminoacyl-tRNA binding site. The chain is Large ribosomal subunit protein bL19 from Acidithiobacillus ferrooxidans (strain ATCC 23270 / DSM 14882 / CIP 104768 / NCIMB 8455) (Ferrobacillus ferrooxidans (strain ATCC 23270)).